Consider the following 188-residue polypeptide: Hypoxanthine/guanine phosphoribosyltransferase (188 aa).

This sequence belongs to the purine/pyrimidine phosphoribosyltransferase family. Archaeal HPRT subfamily. As to quaternary structure, homodimer.

Its subcellular location is the cytoplasm. It catalyses the reaction IMP + diphosphate = hypoxanthine + 5-phospho-alpha-D-ribose 1-diphosphate. It carries out the reaction GMP + diphosphate = guanine + 5-phospho-alpha-D-ribose 1-diphosphate. Its pathway is purine metabolism; IMP biosynthesis via salvage pathway; IMP from hypoxanthine: step 1/1. Its function is as follows. Catalyzes a salvage reaction resulting in the formation of IMP that is energically less costly than de novo synthesis. This chain is Hypoxanthine/guanine phosphoribosyltransferase, found in Methanobrevibacter ruminantium (strain ATCC 35063 / DSM 1093 / JCM 13430 / OCM 146 / M1) (Methanobacterium ruminantium).